Reading from the N-terminus, the 155-residue chain is D-aminoacyl-tRNA deacylase (155 aa).

The Gly-cisPro motif, important for rejection of L-amino acids signature appears at 137 to 138 (GP).

This sequence belongs to the DTD family. As to quaternary structure, homodimer.

Its subcellular location is the cytoplasm. The enzyme catalyses glycyl-tRNA(Ala) + H2O = tRNA(Ala) + glycine + H(+). It carries out the reaction a D-aminoacyl-tRNA + H2O = a tRNA + a D-alpha-amino acid + H(+). An aminoacyl-tRNA editing enzyme that deacylates mischarged D-aminoacyl-tRNAs. Also deacylates mischarged glycyl-tRNA(Ala), protecting cells against glycine mischarging by AlaRS. Acts via tRNA-based rather than protein-based catalysis; rejects L-amino acids rather than detecting D-amino acids in the active site. By recycling D-aminoacyl-tRNA to D-amino acids and free tRNA molecules, this enzyme counteracts the toxicity associated with the formation of D-aminoacyl-tRNA entities in vivo and helps enforce protein L-homochirality. The chain is D-aminoacyl-tRNA deacylase from Nitrosococcus oceani (strain ATCC 19707 / BCRC 17464 / JCM 30415 / NCIMB 11848 / C-107).